Here is a 291-residue protein sequence, read N- to C-terminus: Formamidopyrimidine-DNA glycosylase (291 aa).

The Schiff-base intermediate with DNA role is filled by proline 2. Glutamate 3 functions as the Proton donor in the catalytic mechanism. The active-site Proton donor; for beta-elimination activity is lysine 60. Histidine 97, arginine 116, and arginine 161 together coordinate DNA. Residues 246–280 (WVYNRAGEPCRVCGMPIQRIRLAGRSSHFCSECQT) form an FPG-type zinc finger. Catalysis depends on arginine 270, which acts as the Proton donor; for delta-elimination activity.

It belongs to the FPG family. As to quaternary structure, monomer. It depends on Zn(2+) as a cofactor.

The catalysed reaction is Hydrolysis of DNA containing ring-opened 7-methylguanine residues, releasing 2,6-diamino-4-hydroxy-5-(N-methyl)formamidopyrimidine.. It catalyses the reaction 2'-deoxyribonucleotide-(2'-deoxyribose 5'-phosphate)-2'-deoxyribonucleotide-DNA = a 3'-end 2'-deoxyribonucleotide-(2,3-dehydro-2,3-deoxyribose 5'-phosphate)-DNA + a 5'-end 5'-phospho-2'-deoxyribonucleoside-DNA + H(+). Involved in base excision repair of DNA damaged by oxidation or by mutagenic agents. Acts as a DNA glycosylase that recognizes and removes damaged bases. Has a preference for oxidized purines, such as 7,8-dihydro-8-oxoguanine (8-oxoG). Has AP (apurinic/apyrimidinic) lyase activity and introduces nicks in the DNA strand. Cleaves the DNA backbone by beta-delta elimination to generate a single-strand break at the site of the removed base with both 3'- and 5'-phosphates. The polypeptide is Formamidopyrimidine-DNA glycosylase (Nostoc punctiforme (strain ATCC 29133 / PCC 73102)).